We begin with the raw amino-acid sequence, 235 residues long: Uracil-DNA glycosylase (235 aa).

Catalysis depends on Asp-71, which acts as the Proton acceptor.

The protein belongs to the uracil-DNA glycosylase (UDG) superfamily. UNG family.

It localises to the cytoplasm. It carries out the reaction Hydrolyzes single-stranded DNA or mismatched double-stranded DNA and polynucleotides, releasing free uracil.. Excises uracil residues from the DNA which can arise as a result of misincorporation of dUMP residues by DNA polymerase or due to deamination of cytosine. The polypeptide is Uracil-DNA glycosylase (Campylobacter hominis (strain ATCC BAA-381 / DSM 21671 / CCUG 45161 / LMG 19568 / NCTC 13146 / CH001A)).